We begin with the raw amino-acid sequence, 194 residues long: CASP-like protein 1D1 (194 aa).

The span at 1-16 (MGSDETKSTLDTERST) shows a compositional bias: basic and acidic residues. Residues 1–23 (MGSDETKSTLDTERSTVPRTGTT) form a disordered region. Residues 1–31 (MGSDETKSTLDTERSTVPRTGTTTKSCSITQ) lie on the Cytoplasmic side of the membrane. The helical transmembrane segment at 32-52 (VVLRFVLFAATLTSIVVMVTS) threads the bilayer. At 53-77 (KQTKNIFIPGTPIRIPAAKFTNSPA) the chain is on the extracellular side. Residues 78–98 (LIYFVVALSVACFYSIVSTFV) form a helical membrane-spanning segment. Residues 99 to 109 (TVSAFKKHSCS) are Cytoplasmic-facing. The chain crosses the membrane as a helical span at residues 110 to 130 (AILLLNLAIMDAVMVGIVASA). At 131–163 (TGAGGGVAYLGLKGNKEVRWGKICNIYDKFCRH) the chain is on the extracellular side. A helical membrane pass occupies residues 164-184 (VGGAIAVSLFASVILLLLSII). At 185 to 194 (SVLSLYKKIR) the chain is on the cytoplasmic side.

Belongs to the Casparian strip membrane proteins (CASP) family. Homodimer and heterodimers.

Its subcellular location is the cell membrane. The sequence is that of CASP-like protein 1D1 from Arabidopsis lyrata subsp. lyrata (Lyre-leaved rock-cress).